A 367-amino-acid chain; its full sequence is Glutamate 5-kinase (367 aa).

Lysine 10 is a binding site for ATP. Substrate is bound by residues serine 50, aspartate 137, and asparagine 149. Residues 169-170 (TD) and 211-217 (TGGMSTK) each bind ATP. Residues 275 to 353 (AGEITVDEGA…QEIDAILGYE (79 aa)) enclose the PUA domain.

This sequence belongs to the glutamate 5-kinase family.

The protein localises to the cytoplasm. It carries out the reaction L-glutamate + ATP = L-glutamyl 5-phosphate + ADP. It participates in amino-acid biosynthesis; L-proline biosynthesis; L-glutamate 5-semialdehyde from L-glutamate: step 1/2. In terms of biological role, catalyzes the transfer of a phosphate group to glutamate to form L-glutamate 5-phosphate. This Shigella flexneri protein is Glutamate 5-kinase.